The following is a 543-amino-acid chain: Glucose-6-phosphate isomerase (543 aa).

E351 functions as the Proton donor in the catalytic mechanism. Residues H382 and K511 contribute to the active site.

It belongs to the GPI family.

It localises to the cytoplasm. It carries out the reaction alpha-D-glucose 6-phosphate = beta-D-fructose 6-phosphate. Its pathway is carbohydrate biosynthesis; gluconeogenesis. The protein operates within carbohydrate degradation; glycolysis; D-glyceraldehyde 3-phosphate and glycerone phosphate from D-glucose: step 2/4. Its function is as follows. Catalyzes the reversible isomerization of glucose-6-phosphate to fructose-6-phosphate. The protein is Glucose-6-phosphate isomerase of Hydrogenovibrio crunogenus (strain DSM 25203 / XCL-2) (Thiomicrospira crunogena).